The primary structure comprises 328 residues: Tetraacyldisaccharide 4'-kinase (328 aa).

Residue 55 to 62 participates in ATP binding; sequence TAGGNGKT.

Belongs to the LpxK family.

The catalysed reaction is a lipid A disaccharide + ATP = a lipid IVA + ADP + H(+). The protein operates within glycolipid biosynthesis; lipid IV(A) biosynthesis; lipid IV(A) from (3R)-3-hydroxytetradecanoyl-[acyl-carrier-protein] and UDP-N-acetyl-alpha-D-glucosamine: step 6/6. In terms of biological role, transfers the gamma-phosphate of ATP to the 4'-position of a tetraacyldisaccharide 1-phosphate intermediate (termed DS-1-P) to form tetraacyldisaccharide 1,4'-bis-phosphate (lipid IVA). This chain is Tetraacyldisaccharide 4'-kinase, found in Escherichia coli O6:K15:H31 (strain 536 / UPEC).